Consider the following 255-residue polypeptide: Indole-3-glycerol phosphate synthase (255 aa).

This sequence belongs to the TrpC family.

It catalyses the reaction 1-(2-carboxyphenylamino)-1-deoxy-D-ribulose 5-phosphate + H(+) = (1S,2R)-1-C-(indol-3-yl)glycerol 3-phosphate + CO2 + H2O. The protein operates within amino-acid biosynthesis; L-tryptophan biosynthesis; L-tryptophan from chorismate: step 4/5. The polypeptide is Indole-3-glycerol phosphate synthase (Streptococcus thermophilus (strain ATCC BAA-250 / LMG 18311)).